A 210-amino-acid chain; its full sequence is NAD(P)H-quinone oxidoreductase subunit I (210 aa).

2 4Fe-4S ferredoxin-type domains span residues 54 to 83 (GRIHFEFDKCIACEICVRVCPIDLPVVDWA) and 94 to 123 (YSYSIDFGVCIFCANCVEFCPTNCLSVTED). The [4Fe-4S] cluster site is built by cysteine 63, cysteine 66, cysteine 69, cysteine 73, cysteine 103, cysteine 106, cysteine 109, and cysteine 113.

This sequence belongs to the complex I 23 kDa subunit family. In terms of assembly, NDH-1 is composed of at least 11 different subunits. [4Fe-4S] cluster serves as cofactor.

It is found in the cellular thylakoid membrane. It catalyses the reaction a plastoquinone + NADH + (n+1) H(+)(in) = a plastoquinol + NAD(+) + n H(+)(out). The catalysed reaction is a plastoquinone + NADPH + (n+1) H(+)(in) = a plastoquinol + NADP(+) + n H(+)(out). Functionally, NDH-1 shuttles electrons from an unknown electron donor, via FMN and iron-sulfur (Fe-S) centers, to quinones in the respiratory and/or the photosynthetic chain. The immediate electron acceptor for the enzyme in this species is believed to be plastoquinone. Couples the redox reaction to proton translocation, and thus conserves the redox energy in a proton gradient. This chain is NAD(P)H-quinone oxidoreductase subunit I, found in Synechococcus sp. (strain JA-2-3B'a(2-13)) (Cyanobacteria bacterium Yellowstone B-Prime).